Consider the following 133-residue polypeptide: Transcription antitermination protein NusB (133 aa).

It belongs to the NusB family.

Its function is as follows. Involved in transcription antitermination. Required for transcription of ribosomal RNA (rRNA) genes. Binds specifically to the boxA antiterminator sequence of the ribosomal RNA (rrn) operons. This Shouchella clausii (strain KSM-K16) (Alkalihalobacillus clausii) protein is Transcription antitermination protein NusB.